A 327-amino-acid polypeptide reads, in one-letter code: Putative HTH-type transcriptional regulatory protein Mbar_A2318 (327 aa).

Positions 132–190 (LKKARMGQSMSLGTLASMVGVSRRTISKYEEEGMDASIDVVLQLEDIFGVELAKPINIL) constitute an HTH cro/C1-type domain. The segment at residues 143–162 (LGTLASMVGVSRRTISKYEE) is a DNA-binding region (H-T-H motif).

This is Putative HTH-type transcriptional regulatory protein Mbar_A2318 from Methanosarcina barkeri (strain Fusaro / DSM 804).